Reading from the N-terminus, the 474-residue chain is Trehalose-6-phosphate synthase (474 aa).

Position 10 (Arg10) interacts with D-glucose 6-phosphate. 22–23 (GG) is a UDP-alpha-D-glucose binding site. D-glucose 6-phosphate-binding residues include Tyr77 and Asp131. UDP-alpha-D-glucose is bound by residues Arg263 and Lys268. Arg301 contributes to the D-glucose 6-phosphate binding site. UDP-alpha-D-glucose is bound by residues Phe340 and 366-370 (LVAKE).

Belongs to the glycosyltransferase 20 family. In terms of assembly, homotetramer.

It catalyses the reaction D-glucose 6-phosphate + UDP-alpha-D-glucose = alpha,alpha-trehalose 6-phosphate + UDP + H(+). It functions in the pathway glycan biosynthesis; trehalose biosynthesis. Probably involved in the osmoprotection via the biosynthesis of trehalose. Catalyzes the transfer of glucose from UDP-alpha-D-glucose (UDP-Glc) to D-glucose 6-phosphate (Glc-6-P) to form trehalose-6-phosphate. Acts with retention of the anomeric configuration of the UDP-sugar donor. This is Trehalose-6-phosphate synthase from Escherichia coli O157:H7.